Here is a 255-residue protein sequence, read N- to C-terminus: MLVMAGLGLYDERDVTLKTLDFAKKVDKIYAEFYTAILTGTTMEKIEGTLQKPITVLDREKVEYETNKLIDEAKDKDIMFLTAGDPMVATTHVDIAVEARKKGIEVVIINAPSIYSAIGITGLQLYKFGKTTSIVFPEPNYFPETPYDVIKDNLKLGYHTLCLLDIQADKERFMTANEGLDALLKIEEKRKENVISEETEVAVVARAGSINPGLYYGKIKDLLNYDFKSPLHCVIIPGKLHFMEEDALKYLFENI.

S-adenosyl-L-methionine contacts are provided by residues L9, D85, V88, 113–114 (SI), L164, A207, and H232.

This sequence belongs to the diphthine synthase family. Homodimer.

It catalyses the reaction 2-[(3S)-amino-3-carboxypropyl]-L-histidyl-[translation elongation factor 2] + 3 S-adenosyl-L-methionine = diphthine-[translation elongation factor 2] + 3 S-adenosyl-L-homocysteine + 3 H(+). Its pathway is protein modification; peptidyl-diphthamide biosynthesis. Its function is as follows. S-adenosyl-L-methionine-dependent methyltransferase that catalyzes the trimethylation of the amino group of the modified target histidine residue in translation elongation factor 2 (EF-2), to form an intermediate called diphthine. The three successive methylation reactions represent the second step of diphthamide biosynthesis. This is Diphthine synthase from Methanococcus maripaludis (strain DSM 14266 / JCM 13030 / NBRC 101832 / S2 / LL).